The chain runs to 133 residues: ATP synthase epsilon chain, chloroplastic (133 aa).

It belongs to the ATPase epsilon chain family. As to quaternary structure, F-type ATPases have 2 components, CF(1) - the catalytic core - and CF(0) - the membrane proton channel. CF(1) has five subunits: alpha(3), beta(3), gamma(1), delta(1), epsilon(1). CF(0) has three main subunits: a, b and c.

Its subcellular location is the plastid. The protein localises to the chloroplast thylakoid membrane. Its function is as follows. Produces ATP from ADP in the presence of a proton gradient across the membrane. The polypeptide is ATP synthase epsilon chain, chloroplastic (Piper cenocladum (Ant piper)).